Here is a 138-residue protein sequence, read N- to C-terminus: uncharacterized protein (138 aa).

Residues 9–133 (EDEWKKELGP…NSASLEFHNE (125 aa)) form the MsrB domain. Zn(2+) is bound by residues C49, C52, C97, and C100. The active-site Nucleophile is C122.

It belongs to the MsrB Met sulfoxide reductase family. It depends on Zn(2+) as a cofactor.

The protein localises to the cytoplasm. The protein resides in the nucleus. This is an uncharacterized protein from Schizosaccharomyces pombe (strain 972 / ATCC 24843) (Fission yeast).